The following is a 381-amino-acid chain: Putative 8-amino-7-oxononanoate synthase (381 aa).

Residue Arg22 participates in substrate binding. Pyridoxal 5'-phosphate is bound at residue Gly109–Phe110. His134 provides a ligand contact to substrate. Pyridoxal 5'-phosphate-binding positions include Ser182, Asp207–His210, and Thr233–Lys236. Lys236 is modified (N6-(pyridoxal phosphate)lysine). Thr345 is a substrate binding site.

Belongs to the class-II pyridoxal-phosphate-dependent aminotransferase family. BioF subfamily. Homodimer. Pyridoxal 5'-phosphate is required as a cofactor.

It catalyses the reaction 6-carboxyhexanoyl-[ACP] + L-alanine + H(+) = (8S)-8-amino-7-oxononanoate + holo-[ACP] + CO2. It participates in cofactor biosynthesis; biotin biosynthesis. Catalyzes the decarboxylative condensation of pimeloyl-[acyl-carrier protein] and L-alanine to produce 8-amino-7-oxononanoate (AON), [acyl-carrier protein], and carbon dioxide. This is Putative 8-amino-7-oxononanoate synthase (bioF) from Acidiphilium cryptum (strain JF-5).